A 394-amino-acid polypeptide reads, in one-letter code: uncharacterized protein (394 aa).

Transmembrane regions (helical) follow at residues 10–30, 50–70, 79–99, 100–120, 138–158, 166–186, 218–238, 243–263, 291–311, 337–357, and 364–384; these read PALI…NYYA, FIVT…VPLG, IVSM…SQSL, AMMI…QILV, TIMS…GLLA, VFWV…RGLP, LLGC…AFLL, FNYS…GALG, WLAI…ILVL, LTAG…LISA, and GWAG…LVWW.

The protein belongs to the major facilitator superfamily.

Its subcellular location is the cell inner membrane. This is an uncharacterized protein from Escherichia coli (strain K12).